Consider the following 343-residue polypeptide: Methionine import ATP-binding protein MetN 1 (343 aa).

In terms of domain architecture, ABC transporter spans I2 to I241. G38–S45 is an ATP binding site.

This sequence belongs to the ABC transporter superfamily. Methionine importer (TC 3.A.1.24) family. The complex is composed of two ATP-binding proteins (MetN), two transmembrane proteins (MetI) and a solute-binding protein (MetQ).

It is found in the cell inner membrane. The catalysed reaction is L-methionine(out) + ATP + H2O = L-methionine(in) + ADP + phosphate + H(+). The enzyme catalyses D-methionine(out) + ATP + H2O = D-methionine(in) + ADP + phosphate + H(+). Functionally, part of the ABC transporter complex MetNIQ involved in methionine import. Responsible for energy coupling to the transport system. The sequence is that of Methionine import ATP-binding protein MetN 1 from Yersinia pestis bv. Antiqua (strain Antiqua).